Here is an 83-residue protein sequence, read N- to C-terminus: uncharacterized protein (83 aa).

A run of 2 helical transmembrane segments spans residues 11–31 (FYCI…SFLL) and 48–68 (WHNL…HIWM).

The protein localises to the cell membrane. This is an uncharacterized protein from Bacillus subtilis (strain 168).